We begin with the raw amino-acid sequence, 453 residues long: tRNA-2-methylthio-N(6)-dimethylallyladenosine synthase (453 aa).

The MTTase N-terminal domain maps to 11–131 (KSFHVKSFGC…LPQLVADAAE (121 aa)). C20, C56, C94, C167, C171, and C174 together coordinate [4Fe-4S] cluster. The Radical SAM core domain maps to 153-385 (RRQGPTAFLT…QALLNEQQHR (233 aa)). The TRAM domain maps to 388-449 (LATVGKRCEV…PNSLSGALVE (62 aa)).

The protein belongs to the methylthiotransferase family. MiaB subfamily. As to quaternary structure, monomer. [4Fe-4S] cluster is required as a cofactor.

It is found in the cytoplasm. It carries out the reaction N(6)-dimethylallyladenosine(37) in tRNA + (sulfur carrier)-SH + AH2 + 2 S-adenosyl-L-methionine = 2-methylsulfanyl-N(6)-dimethylallyladenosine(37) in tRNA + (sulfur carrier)-H + 5'-deoxyadenosine + L-methionine + A + S-adenosyl-L-homocysteine + 2 H(+). Catalyzes the methylthiolation of N6-(dimethylallyl)adenosine (i(6)A), leading to the formation of 2-methylthio-N6-(dimethylallyl)adenosine (ms(2)i(6)A) at position 37 in tRNAs that read codons beginning with uridine. This Rhizorhabdus wittichii (strain DSM 6014 / CCUG 31198 / JCM 15750 / NBRC 105917 / EY 4224 / RW1) (Sphingomonas wittichii) protein is tRNA-2-methylthio-N(6)-dimethylallyladenosine synthase.